Reading from the N-terminus, the 334-residue chain is Holliday junction branch migration complex subunit RuvB (334 aa).

A large ATPase domain (RuvB-L) region spans residues 1–180 (MSEFLTPERT…FGIILELDFY (180 aa)). Residues L19, R20, G61, K64, T65, T66, 127-129 (EDF), R170, Y180, and R217 contribute to the ATP site. T65 contacts Mg(2+). The interval 181-251 (TVKELKEIIK…IVLKTMEVLN (71 aa)) is small ATPAse domain (RuvB-S). Residues 254–334 (AEGLDEFDRK…KYEVPENRLF (81 aa)) are head domain (RuvB-H). DNA contacts are provided by R309 and R314.

It belongs to the RuvB family. As to quaternary structure, homohexamer. Forms an RuvA(8)-RuvB(12)-Holliday junction (HJ) complex. HJ DNA is sandwiched between 2 RuvA tetramers; dsDNA enters through RuvA and exits via RuvB. An RuvB hexamer assembles on each DNA strand where it exits the tetramer. Each RuvB hexamer is contacted by two RuvA subunits (via domain III) on 2 adjacent RuvB subunits; this complex drives branch migration. In the full resolvosome a probable DNA-RuvA(4)-RuvB(12)-RuvC(2) complex forms which resolves the HJ.

The protein localises to the cytoplasm. It catalyses the reaction ATP + H2O = ADP + phosphate + H(+). The RuvA-RuvB-RuvC complex processes Holliday junction (HJ) DNA during genetic recombination and DNA repair, while the RuvA-RuvB complex plays an important role in the rescue of blocked DNA replication forks via replication fork reversal (RFR). RuvA specifically binds to HJ cruciform DNA, conferring on it an open structure. The RuvB hexamer acts as an ATP-dependent pump, pulling dsDNA into and through the RuvAB complex. RuvB forms 2 homohexamers on either side of HJ DNA bound by 1 or 2 RuvA tetramers; 4 subunits per hexamer contact DNA at a time. Coordinated motions by a converter formed by DNA-disengaged RuvB subunits stimulates ATP hydrolysis and nucleotide exchange. Immobilization of the converter enables RuvB to convert the ATP-contained energy into a lever motion, pulling 2 nucleotides of DNA out of the RuvA tetramer per ATP hydrolyzed, thus driving DNA branch migration. The RuvB motors rotate together with the DNA substrate, which together with the progressing nucleotide cycle form the mechanistic basis for DNA recombination by continuous HJ branch migration. Branch migration allows RuvC to scan DNA until it finds its consensus sequence, where it cleaves and resolves cruciform DNA. The protein is Holliday junction branch migration complex subunit RuvB of Thermotoga petrophila (strain ATCC BAA-488 / DSM 13995 / JCM 10881 / RKU-1).